Reading from the N-terminus, the 481-residue chain is MLPVVALVGRPNVGKSTLFNRLTNTRDALVADYPGLTRDRKYGQAKFEKRQFIVVDTGGITGDEEGIDAEMAQQSLLAIEEADVVLFLVDARAGLLPADQGIADHLRRINKQIFVVANKVDGIDGDSESAEFYSLGLGAIKQIAAAHGRGVSQLLQDALKPLESDFPDMEIIDEAPEEEEDAESQRQRLQELPIKLAIVGKPNVGKSTLTNRILGEERVVVYDMPGTTRDSVYIPMERDEREYILIDTAGVRKRKKISEAVEKFSIVKTLQAIEEANVVLLVIDAREGITDQDLSLLGFVLNSGRSLVVAVNKWDGLSTDIKDDIKREMDRRLGFIDFARIHFISALHGSGVGNLFESVQEAYMSATKRINTALLTQIMEMAQDDHQPPLVRGRRVKMKYAHAGGYNPPVIVIHGNQVDDLPSSYKRFLMNYFRKALEIMGTPIKIEFREGNNPFEGKKNNLTLAQQRKRRRMMSYYKEKK.

2 EngA-type G domains span residues 3 to 166 and 194 to 367; these read PVVA…ESDF and IKLA…MSAT. GTP is bound by residues 9–16, 56–60, 118–121, 200–207, 247–251, and 312–315; these read GRPNVGKS, DTGGI, NKVD, GKPNVGKS, DTAGV, and NKWD. The region spanning 368–452 is the KH-like domain; the sequence is KRINTALLTQ…PIKIEFREGN (85 aa).

It belongs to the TRAFAC class TrmE-Era-EngA-EngB-Septin-like GTPase superfamily. EngA (Der) GTPase family. In terms of assembly, associates with the 50S ribosomal subunit.

In terms of biological role, GTPase that plays an essential role in the late steps of ribosome biogenesis. The sequence is that of GTPase Der from Alteromonas mediterranea (strain DSM 17117 / CIP 110805 / LMG 28347 / Deep ecotype).